The sequence spans 114 residues: Ribosome-binding factor A (114 aa).

The protein belongs to the RbfA family. Monomer. Binds 30S ribosomal subunits, but not 50S ribosomal subunits or 70S ribosomes.

The protein resides in the cytoplasm. Its function is as follows. One of several proteins that assist in the late maturation steps of the functional core of the 30S ribosomal subunit. Associates with free 30S ribosomal subunits (but not with 30S subunits that are part of 70S ribosomes or polysomes). Required for efficient processing of 16S rRNA. May interact with the 5'-terminal helix region of 16S rRNA. This chain is Ribosome-binding factor A, found in Listeria monocytogenes serotype 4b (strain F2365).